The chain runs to 57 residues: Protein translocase subunit SecE (57 aa).

The chain crosses the membrane as a helical span at residues 33 to 53 (GAGIFLVGLLGFIIFAVMSFL).

Belongs to the SecE/SEC61-gamma family. As to quaternary structure, component of the Sec protein translocase complex. Heterotrimer consisting of SecY (alpha), SecG (beta) and SecE (gamma) subunits. The heterotrimers can form oligomers, although 1 heterotrimer is thought to be able to translocate proteins. Interacts with the ribosome. May interact with SecDF, and other proteins may be involved.

The protein resides in the cell membrane. In terms of biological role, essential subunit of the Sec protein translocation channel SecYEG. Clamps together the 2 halves of SecY. May contact the channel plug during translocation. This is Protein translocase subunit SecE from Haloferax mediterranei (strain ATCC 33500 / DSM 1411 / JCM 8866 / NBRC 14739 / NCIMB 2177 / R-4) (Halobacterium mediterranei).